A 182-amino-acid chain; its full sequence is Negative transcriptional regulator PadR (182 aa).

The protein belongs to the PadR family. In terms of assembly, homodimer.

Its subcellular location is the cytoplasm. Its activity is regulated as follows. PadR repressor activity is inhibited in the presence of phenolic acids, which directly modulate PadR binding to the promoter of padC, leading to the dissociation of PadR from the operator DNA and expression of padC. In the presence of MgCl(2), binding is not altered by phenolic acids. Its function is as follows. Transcriptional regulator involved in the regulation of the metabolism of phenolic acids. In the absence of phenolic acids, represses the expression of padC, which encodes a phenolic acid decarboxylase (PAD) involved in the detoxification of harmful phenolic acids. Acts by binding to the padC promoter region, preventing the transcription of the gene. In Bacillus subtilis (strain 168), this protein is Negative transcriptional regulator PadR.